A 589-amino-acid chain; its full sequence is Threonine--tRNA ligase (589 aa).

Residues 191–487 (DHRKIGKNLG…LLEQTKGNFP (297 aa)) form a catalytic region. Cys-284, His-335, and His-464 together coordinate Zn(2+).

This sequence belongs to the class-II aminoacyl-tRNA synthetase family. In terms of assembly, homodimer. The cofactor is Zn(2+).

Its subcellular location is the cytoplasm. The catalysed reaction is tRNA(Thr) + L-threonine + ATP = L-threonyl-tRNA(Thr) + AMP + diphosphate + H(+). In terms of biological role, catalyzes the attachment of threonine to tRNA(Thr) in a two-step reaction: L-threonine is first activated by ATP to form Thr-AMP and then transferred to the acceptor end of tRNA(Thr). Also edits incorrectly charged L-seryl-tRNA(Thr). This Mycoplasmopsis pulmonis (strain UAB CTIP) (Mycoplasma pulmonis) protein is Threonine--tRNA ligase.